We begin with the raw amino-acid sequence, 581 residues long: UvrABC system protein C (581 aa).

The 80-residue stretch at arginine 15–valine 94 folds into the GIY-YIG domain. The 36-residue stretch at glycine 202 to leucine 237 folds into the UVR domain.

It belongs to the UvrC family. As to quaternary structure, interacts with UvrB in an incision complex.

It localises to the cytoplasm. Functionally, the UvrABC repair system catalyzes the recognition and processing of DNA lesions. UvrC both incises the 5' and 3' sides of the lesion. The N-terminal half is responsible for the 3' incision and the C-terminal half is responsible for the 5' incision. In Haloarcula marismortui (strain ATCC 43049 / DSM 3752 / JCM 8966 / VKM B-1809) (Halobacterium marismortui), this protein is UvrABC system protein C.